Consider the following 435-residue polypeptide: Nematode resistance protein-like HSPRO2 (435 aa).

Interacts with SNF4.

The protein resides in the cytoplasm. In terms of biological role, positive regulator of basal resistance. This Arabidopsis thaliana (Mouse-ear cress) protein is Nematode resistance protein-like HSPRO2 (HSPRO2).